A 155-amino-acid polypeptide reads, in one-letter code: MLHRNPDEFLKSIPKDKRIMCLDMGEKQIGIAFSDKTQLIATAHSIYHRKNMSKDLGYLHRIFKENEAGSMVIGIPLNIDEQETKWCKTIIQFANKIIKKYKVNTYLQDESLSTSIATHTLKITGISITKSKKIDDKISACIILQRTLDKINTIK.

Belongs to the YqgF nuclease family.

The protein resides in the cytoplasm. Its function is as follows. Could be a nuclease involved in processing of the 5'-end of pre-16S rRNA. In Wolbachia sp. subsp. Drosophila simulans (strain wRi), this protein is Putative pre-16S rRNA nuclease.